The primary structure comprises 310 residues: Iron ABC transporter substrate-binding lipoprotein MtsA (310 aa).

Residues 1-20 (MGKRMSLILGAFLSVFLLVA) form the signal peptide. C21 is lipidated: N-palmitoyl cysteine. C21 carries S-diacylglycerol cysteine lipidation. H68, H140, E206, and D281 together coordinate Fe(2+).

The protein belongs to the bacterial solute-binding protein 9 family. Lipoprotein receptor antigen (Lrai) subfamily.

Its subcellular location is the cell membrane. Its function is as follows. Part of the ATP-binding cassette (ABC) transport system MtsABC involved in iron import. Binds iron with high affinity and specificity and delivers it to the membrane permease for translocation into the cytoplasm. Has low affinity for Zn(2+) and Cu(2+). The polypeptide is Iron ABC transporter substrate-binding lipoprotein MtsA (mtsA) (Streptococcus pyogenes serotype M1).